The following is a 254-amino-acid chain: MRERMVTWAAVFQRNAMSWRREMAASVLGSVIDPLIMLFGLGVGLGKIVDSVDGRSYAEFLACGLILTSAMSASNYEMLYGTYSRIYVTGTLKSMRYAPICVSDYLIGEVLWAAYEGVVAGTIVAVCTAFLGYIPGWSVIYILPDILFVALIFSSTSLLVAAISRGYALFAFYQSIAIAPLVFLSGVIVPRFTGNDVISGMIHFSPLYRAVNDVRNVVYEGRGTQVGPLLLLSLLYASVMVFISAKVICVRLDD.

Transmembrane regions (helical) follow at residues 25 to 45, 60 to 80, 106 to 126, 133 to 153, 169 to 189, and 230 to 250; these read ASVLGSVIDPLIMLFGLGVGL, FLACGLILTSAMSASNYEMLY, LIGEVLWAAYEGVVAGTIVAV, YIPGWSVIYILPDILFVALIF, LFAFYQSIAIAPLVFLSGVIV, and LLLSLLYASVMVFISAKVICV. Residues 25–251 enclose the ABC transmembrane type-2 domain; the sequence is ASVLGSVIDP…FISAKVICVR (227 aa).

The protein belongs to the ABC-2 integral membrane protein family. Lipooligosaccharide exporter (TC 3.A.1.102) subfamily. The complex is composed of two ATP-binding proteins (NodI) and two transmembrane proteins (NodJ).

Its subcellular location is the cell inner membrane. In terms of biological role, part of the ABC transporter complex NodIJ involved in the export of the nodulation factors (Nod factors), the bacterial signal molecules that induce symbiosis and subsequent nodulation induction. Nod factors are LCO (lipo-chitin oligosaccharide), a modified beta-1,4-linked N-acetylglucosamine oligosaccharide. This subunit encodes the transporter. This Azorhizobium caulinodans (strain ATCC 43989 / DSM 5975 / JCM 20966 / LMG 6465 / NBRC 14845 / NCIMB 13405 / ORS 571) protein is Nodulation protein J (nodJ).